The following is a 117-amino-acid chain: Ig kappa chain V region 12F2 (117 aa).

Residues 1-6 form the signal peptide; it reads LPGARC. Positions 7 to 29 are framework-1; it reads AYDMTQTPASVEVAVGGTVTIKC. Residues C29 and C86 are joined by a disulfide bond. Residues 30 to 40 are complementarity-determining-1; it reads QASQSISTYLS. The tract at residues 41–55 is framework-2; the sequence is WYQQKPGQRPKLLIY. The complementarity-determining-2 stretch occupies residues 56–62; the sequence is RASTLAS. Residues 63 to 94 form a framework-3 region; the sequence is GVSSRFKGSGSGTEFTLTISGVECADAATYYC. The interval 95-106 is complementarity-determining-3; that stretch reads QQGWSSSNVENV. The interval 107-116 is framework-4; the sequence is FGGGTEVVVK.

The chain is Ig kappa chain V region 12F2 from Oryctolagus cuniculus (Rabbit).